A 92-amino-acid chain; its full sequence is Non-specific lipid-transfer protein 2 (92 aa).

4 cysteine pairs are disulfide-bonded: Cys4–Cys52, Cys14–Cys28, Cys29–Cys74, and Cys50–Cys88.

The protein belongs to the plant LTP family. In terms of tissue distribution, expressed in seeds and, at very low levels, in pulp of fruit (at protein level).

In terms of biological role, plant non-specific lipid-transfer proteins transfer phospholipids as well as galactolipids across membranes. May play a role in wax or cutin deposition in the cell walls of expanding epidermal cells and certain secretory tissues. This is Non-specific lipid-transfer protein 2 from Actinidia deliciosa (Kiwi).